Consider the following 144-residue polypeptide: Large ribosomal subunit protein uL15 (144 aa).

Positions 1-59 are disordered; sequence MELNNLKPAEGAKHAKRRVGRGIGSGLGKTAGRGHKGQKSRSGGFHKVGFEGGQMPLQR. Residues 21-31 show a composition bias toward gly residues; sequence RGIGSGLGKTA.

The protein belongs to the universal ribosomal protein uL15 family. As to quaternary structure, part of the 50S ribosomal subunit.

Its function is as follows. Binds to the 23S rRNA. The sequence is that of Large ribosomal subunit protein uL15 from Burkholderia thailandensis (strain ATCC 700388 / DSM 13276 / CCUG 48851 / CIP 106301 / E264).